Here is a 188-residue protein sequence, read N- to C-terminus: GMP synthase [glutamine-hydrolyzing] subunit A (188 aa).

The Glutamine amidotransferase type-1 domain maps to 2-188 (KVGLVYYGGQ…FKNFLGVCRK (187 aa)). Cysteine 79 acts as the Nucleophile in catalysis. Residues histidine 166 and glutamate 168 contribute to the active site.

In terms of assembly, heterodimer composed of a glutamine amidotransferase subunit (A) and a GMP-binding subunit (B).

It catalyses the reaction XMP + L-glutamine + ATP + H2O = GMP + L-glutamate + AMP + diphosphate + 2 H(+). The protein operates within purine metabolism; GMP biosynthesis; GMP from XMP (L-Gln route): step 1/1. Functionally, catalyzes the synthesis of GMP from XMP. The polypeptide is GMP synthase [glutamine-hydrolyzing] subunit A (Saccharolobus solfataricus (strain ATCC 35092 / DSM 1617 / JCM 11322 / P2) (Sulfolobus solfataricus)).